Consider the following 219-residue polypeptide: Thiamine-phosphate synthase (219 aa).

4-amino-2-methyl-5-(diphosphooxymethyl)pyrimidine-binding positions include 45–49 (QYREK) and Asn77. Asp78 and Asp97 together coordinate Mg(2+). Thr116 serves as a coordination point for 4-amino-2-methyl-5-(diphosphooxymethyl)pyrimidine. A 2-[(2R,5Z)-2-carboxy-4-methylthiazol-5(2H)-ylidene]ethyl phosphate-binding site is contributed by 142–144 (SFT). Lys145 lines the 4-amino-2-methyl-5-(diphosphooxymethyl)pyrimidine pocket. 2-[(2R,5Z)-2-carboxy-4-methylthiazol-5(2H)-ylidene]ethyl phosphate-binding positions include Gly173 and 193-194 (VT).

Belongs to the thiamine-phosphate synthase family. Mg(2+) is required as a cofactor.

The enzyme catalyses 2-[(2R,5Z)-2-carboxy-4-methylthiazol-5(2H)-ylidene]ethyl phosphate + 4-amino-2-methyl-5-(diphosphooxymethyl)pyrimidine + 2 H(+) = thiamine phosphate + CO2 + diphosphate. It carries out the reaction 2-(2-carboxy-4-methylthiazol-5-yl)ethyl phosphate + 4-amino-2-methyl-5-(diphosphooxymethyl)pyrimidine + 2 H(+) = thiamine phosphate + CO2 + diphosphate. It catalyses the reaction 4-methyl-5-(2-phosphooxyethyl)-thiazole + 4-amino-2-methyl-5-(diphosphooxymethyl)pyrimidine + H(+) = thiamine phosphate + diphosphate. Its pathway is cofactor biosynthesis; thiamine diphosphate biosynthesis; thiamine phosphate from 4-amino-2-methyl-5-diphosphomethylpyrimidine and 4-methyl-5-(2-phosphoethyl)-thiazole: step 1/1. Its function is as follows. Condenses 4-methyl-5-(beta-hydroxyethyl)thiazole monophosphate (THZ-P) and 2-methyl-4-amino-5-hydroxymethyl pyrimidine pyrophosphate (HMP-PP) to form thiamine monophosphate (TMP). The protein is Thiamine-phosphate synthase of Caldicellulosiruptor bescii (strain ATCC BAA-1888 / DSM 6725 / KCTC 15123 / Z-1320) (Anaerocellum thermophilum).